Reading from the N-terminus, the 435-residue chain is MEVYIPIIYWKSCSEKEKREILFRPVVNDNSQIKEVVKEIITNVKNSGDKALYDYTKTFDKIRLESIQVSYGEIVDSDSFVNEEIQKSISVAKNNIKIFHEKQTHNVVNIEIQPGVFCRQIIRPIQSVGLYIPGGCAPLVSTVLMLAIPAKIVGCKNIILCSPPPITKEILYASKICGIHNIFQVGGAQAIAAMAFGTKTIPKVNKIFGPGNVYVTEAKLQINALLNDLSIDMLAGPSEILIIADFKANACIIASDFLSQMEHGIYSQAILVTPSYDLACNVIFEINIQLKNLSRKKVINKSLKYSRIIVTKTLLECFEISNLYAPEHLIIQCENSNRLLVYVINAGSIFLGRWSAVASGDYVTGTNHVLPTYGSAIVNSGLTVMDFQKIISVQKLDQQGLIDVSSSIISLSEVERMDAHTNSIKQRLIALQDVK.

NAD(+)-binding residues include Y131, Q189, and N212. The substrate site is built by S238, Q260, and H263. Positions 260 and 263 each coordinate Zn(2+). Residues E327 and H328 each act as proton acceptor in the active site. The substrate site is built by H328, D361, E415, and H420. D361 provides a ligand contact to Zn(2+). Zn(2+) is bound at residue H420.

The protein belongs to the histidinol dehydrogenase family. As to quaternary structure, homodimer. The cofactor is Zn(2+).

The catalysed reaction is L-histidinol + 2 NAD(+) + H2O = L-histidine + 2 NADH + 3 H(+). The protein operates within amino-acid biosynthesis; L-histidine biosynthesis; L-histidine from 5-phospho-alpha-D-ribose 1-diphosphate: step 9/9. In terms of biological role, catalyzes the sequential NAD-dependent oxidations of L-histidinol to L-histidinaldehyde and then to L-histidine. The protein is Histidinol dehydrogenase of Buchnera aphidicola subsp. Baizongia pistaciae (strain Bp).